The primary structure comprises 285 residues: Bifunctional protein FolD (285 aa).

NADP(+) is bound by residues 165-167 (GRS) and S190.

Belongs to the tetrahydrofolate dehydrogenase/cyclohydrolase family. As to quaternary structure, homodimer.

It carries out the reaction (6R)-5,10-methylene-5,6,7,8-tetrahydrofolate + NADP(+) = (6R)-5,10-methenyltetrahydrofolate + NADPH. The catalysed reaction is (6R)-5,10-methenyltetrahydrofolate + H2O = (6R)-10-formyltetrahydrofolate + H(+). It participates in one-carbon metabolism; tetrahydrofolate interconversion. In terms of biological role, catalyzes the oxidation of 5,10-methylenetetrahydrofolate to 5,10-methenyltetrahydrofolate and then the hydrolysis of 5,10-methenyltetrahydrofolate to 10-formyltetrahydrofolate. The protein is Bifunctional protein FolD of Burkholderia mallei (strain NCTC 10247).